We begin with the raw amino-acid sequence, 146 residues long: uncharacterized protein (146 aa).

The region spanning 1–120 is the N-acetyltransferase domain; it reads MTDKFDANDE…TILKWEKNMD (120 aa).

This sequence belongs to the acetyltransferase family.

This is an uncharacterized protein from Streptococcus pyogenes serotype M6 (strain ATCC BAA-946 / MGAS10394).